Reading from the N-terminus, the 238-residue chain is Purine nucleoside phosphorylase DeoD-type (238 aa).

A purine D-ribonucleoside is bound at residue histidine 4. Phosphate-binding positions include glycine 20, arginine 24, arginine 43, and 87–90 (RVGS). Residues 179 to 181 (EME) and 203 to 204 (SD) contribute to the a purine D-ribonucleoside site. Residue aspartate 204 is the Proton donor of the active site.

The protein belongs to the PNP/UDP phosphorylase family. In terms of assembly, homohexamer; trimer of homodimers.

It catalyses the reaction a purine D-ribonucleoside + phosphate = a purine nucleobase + alpha-D-ribose 1-phosphate. The catalysed reaction is a purine 2'-deoxy-D-ribonucleoside + phosphate = a purine nucleobase + 2-deoxy-alpha-D-ribose 1-phosphate. Its function is as follows. Catalyzes the reversible phosphorolytic breakdown of the N-glycosidic bond in the beta-(deoxy)ribonucleoside molecules, with the formation of the corresponding free purine bases and pentose-1-phosphate. This chain is Purine nucleoside phosphorylase DeoD-type, found in Pasteurella multocida (strain Pm70).